The chain runs to 437 residues: ATP-dependent protease ATPase subunit HslU (437 aa).

Residues valine 18, 60–65 (GVGKTE), aspartate 250, glutamate 315, and arginine 387 contribute to the ATP site.

The protein belongs to the ClpX chaperone family. HslU subfamily. A double ring-shaped homohexamer of HslV is capped on each side by a ring-shaped HslU homohexamer. The assembly of the HslU/HslV complex is dependent on binding of ATP.

It localises to the cytoplasm. ATPase subunit of a proteasome-like degradation complex; this subunit has chaperone activity. The binding of ATP and its subsequent hydrolysis by HslU are essential for unfolding of protein substrates subsequently hydrolyzed by HslV. HslU recognizes the N-terminal part of its protein substrates and unfolds these before they are guided to HslV for hydrolysis. This chain is ATP-dependent protease ATPase subunit HslU, found in Desulfovibrio desulfuricans (strain ATCC 27774 / DSM 6949 / MB).